The following is a 991-amino-acid chain: Integrator complex subunit 8 (991 aa).

Positions 1–10 are enriched in basic and acidic residues; that stretch reads MSAEAADREA. The interval 1–22 is disordered; it reads MSAEAADREAATSSRPCTPPQT. The segment covering 11–22 has biased composition (polar residues); sequence ATSSRPCTPPQT. Residues 24–29 carry the WFEF motif motif; it reads WFEFLL. TPR repeat units lie at residues 250 to 288, 319 to 355, 569 to 602, and 829 to 862; these read CQGCYDLGAVYFLQGPTNPSCYEKARDHFFRTKQLVSKI, SQPATPYSQIHNFMKTNNYQGILKIFLEDHLNNSLPD, VYILLAKGLHCSAIKDYPRAKQLLSACLELVTEF, and HSWLTIQADIYFATNEYSAALNYYLQAGAVCSDF.

It belongs to the Integrator subunit 8 family. Component of the Integrator complex, composed of core subunits INTS1, INTS2, INTS3, INTS4, INTS5, INTS6, INTS7, INTS8, INTS9/RC74, INTS10, INTS11/CPSF3L, INTS12, INTS13, INTS14 and INTS15. The core complex associates with protein phosphatase 2A subunits PPP2CA and PPP2R1A, to form the Integrator-PP2A (INTAC) complex.

It is found in the nucleus. The protein localises to the chromosome. Component of the integrator complex, a multiprotein complex that terminates RNA polymerase II (Pol II) transcription in the promoter-proximal region of genes. The integrator complex provides a quality checkpoint during transcription elongation by driving premature transcription termination of transcripts that are unfavorably configured for transcriptional elongation: the complex terminates transcription by (1) catalyzing dephosphorylation of the C-terminal domain (CTD) of Pol II subunit POLR2A/RPB1 and SUPT5H/SPT5, (2) degrading the exiting nascent RNA transcript via endonuclease activity and (3) promoting the release of Pol II from bound DNA. The integrator complex is also involved in terminating the synthesis of non-coding Pol II transcripts, such as enhancer RNAs (eRNAs), small nuclear RNAs (snRNAs), telomerase RNAs and long non-coding RNAs (lncRNAs). Within the integrator complex, INTS8 is required for the recruitment of protein phosphatase 2A (PP2A) to transcription pause-release checkpoint. This chain is Integrator complex subunit 8 (ints8), found in Xenopus laevis (African clawed frog).